The primary structure comprises 156 residues: 3-hydroxyacyl-[acyl-carrier-protein] dehydratase FabZ (156 aa).

The active site involves histidine 50.

This sequence belongs to the thioester dehydratase family. FabZ subfamily.

Its subcellular location is the cytoplasm. The enzyme catalyses a (3R)-hydroxyacyl-[ACP] = a (2E)-enoyl-[ACP] + H2O. Functionally, involved in unsaturated fatty acids biosynthesis. Catalyzes the dehydration of short chain beta-hydroxyacyl-ACPs and long chain saturated and unsaturated beta-hydroxyacyl-ACPs. The polypeptide is 3-hydroxyacyl-[acyl-carrier-protein] dehydratase FabZ (Janthinobacterium sp. (strain Marseille) (Minibacterium massiliensis)).